The chain runs to 236 residues: Small ribosomal subunit protein uS10m (236 aa).

Residues 1–24 constitute a mitochondrion transit peptide; sequence MMRQSIRPLRAFSSEVSWIARRTQ. A disordered region spans residues 29–49; it reads KPGDLVPNKPEPSKNEQEPRF. Basic and acidic residues predominate over residues 39 to 49; sequence EPSKNEQEPRF.

This sequence belongs to the universal ribosomal protein uS10 family. Part of the mitochondrial small ribosomal subunit.

It is found in the mitochondrion. Its function is as follows. Involved in mitochondrial genome encoded proteins translation. Involved in the binding of tRNA to the ribosomes. The polypeptide is Small ribosomal subunit protein uS10m (RSM10) (Gibberella zeae (strain ATCC MYA-4620 / CBS 123657 / FGSC 9075 / NRRL 31084 / PH-1) (Wheat head blight fungus)).